A 91-amino-acid polypeptide reads, in one-letter code: RNA-binding protein Hfq (91 aa).

Positions 9–68 (DPYLNALRRERIPVSIYLVNGIKLQGQIESFDQFVILLKNTVNQMVYKHAISTVVPARSV) constitute a Sm domain. A disordered region spans residues 69–91 (SHHNNNHHTAPTEAVENVETQAE).

Belongs to the Hfq family. Homohexamer.

Its function is as follows. RNA chaperone that binds small regulatory RNA (sRNAs) and mRNAs to facilitate mRNA translational regulation in response to envelope stress, environmental stress and changes in metabolite concentrations. Also binds with high specificity to tRNAs. This Haemophilus influenzae (strain ATCC 51907 / DSM 11121 / KW20 / Rd) protein is RNA-binding protein Hfq.